The sequence spans 305 residues: tRNA uridine(34) hydroxylase (305 aa).

Positions 125–219 (ADENTVVVDT…YLEEVPREQS (95 aa)) constitute a Rhodanese domain. The active-site Cysteine persulfide intermediate is Cys-179.

The protein belongs to the TrhO family.

It carries out the reaction uridine(34) in tRNA + AH2 + O2 = 5-hydroxyuridine(34) in tRNA + A + H2O. Its function is as follows. Catalyzes oxygen-dependent 5-hydroxyuridine (ho5U) modification at position 34 in tRNAs. This Brucella canis (strain ATCC 23365 / NCTC 10854 / RM-666) protein is tRNA uridine(34) hydroxylase.